Consider the following 244-residue polypeptide: DNA repair protein RecO (244 aa).

It belongs to the RecO family.

In terms of biological role, involved in DNA repair and RecF pathway recombination. The polypeptide is DNA repair protein RecO (Koribacter versatilis (strain Ellin345)).